The primary structure comprises 119 residues: MKVELYTNDWIDFFKNIAIAWFKTKRYGNKRLSSIEQKQVNKLIRQEFDQYVEFKIISNLIKDYNDNMEKVISLYGANLMPLNLAVQKLYPELTPTEQDELVKELEHKQKLENGEFENE.

This is an uncharacterized protein from Ureaplasma parvum serovar 3 (strain ATCC 700970).